An 85-amino-acid chain; its full sequence is MLRRKPTRLELKLDDIEEFENIRKDLETRKKQKEDVEVVGGSDGEGAIGLSSDPKSREQMINDRIGYKPQPKPNNRSSQFGSLEF.

The stretch at 7 to 38 (TRLELKLDDIEEFENIRKDLETRKKQKEDVEV) forms a coiled coil. The interval 30–85 (KKQKEDVEVVGGSDGEGAIGLSSDPKSREQMINDRIGYKPQPKPNNRSSQFGSLEF) is disordered. 2 positions are modified to phosphoserine: Ser-42 and Ser-82. The segment covering 73–85 (PNNRSSQFGSLEF) has biased composition (polar residues).

The protein belongs to the CDC26 family. In terms of assembly, V-shaped homodimer. Interacts with CDC16. The mammalian APC/C is composed at least of 14 distinct subunits ANAPC1, ANAPC2, CDC27/APC3, ANAPC4, ANAPC5, CDC16/APC6, ANAPC7, CDC23/APC8, ANAPC10, ANAPC11, CDC26/APC12, ANAPC13, ANAPC15 and ANAPC16 that assemble into a complex of at least 19 chains with a combined molecular mass of around 1.2 MDa; APC/C interacts with FZR1 and FBXO5. Interacts with FBXO43.

It localises to the nucleus. Its pathway is protein modification; protein ubiquitination. Functionally, component of the anaphase promoting complex/cyclosome (APC/C), a cell cycle-regulated E3 ubiquitin ligase that controls progression through mitosis and the G1 phase of the cell cycle. The APC/C complex acts by mediating ubiquitination and subsequent degradation of target proteins: it mainly mediates the formation of 'Lys-11'-linked polyubiquitin chains and, to a lower extent, the formation of 'Lys-48'- and 'Lys-63'-linked polyubiquitin chains. The APC/C complex catalyzes assembly of branched 'Lys-11'-/'Lys-48'-linked branched ubiquitin chains on target proteins. May recruit the E2 ubiquitin-conjugating enzymes to the complex. This chain is Anaphase-promoting complex subunit CDC26 (CDC26), found in Homo sapiens (Human).